The sequence spans 476 residues: Angiotensinogen (476 aa).

The signal sequence occupies residues 1 to 24 (MAPAGVSLRATILCLLAWAGLAAG). A Beta-decarboxylated aspartate; in form angiotensin-A modification is found at Asp-25. 4 N-linked (GlcNAc...) asparagine glycosylation sites follow: Asn-38, Asn-161, Asn-295, and Asn-319. A disulfide bridge connects residues Cys-42 and Cys-162.

The protein belongs to the serpin family. During pregnancy, exists as a disulfide-linked 2:2 heterotetramer with the proform of PRG2 and as a complex (probably a 2:2:2 heterohexamer) with pro-PRG2 and C3dg. Post-translationally, beta-decarboxylation of Asp-25 in angiotensin-2, by mononuclear leukocytes produces alanine. The resulting peptide form, angiotensin-A, has the same affinity for the AT1 receptor as angiotensin-2, but a higher affinity for the AT2 receptor. In response to low blood pressure, the enzyme renin/REN cleaves angiotensinogen to produce angiotensin-1. Angiotensin-1 is a substrate of ACE (angiotensin converting enzyme) that removes a dipeptide to yield the physiologically active peptide angiotensin-2. Angiotensin-1 and angiotensin-2 can be further processed to generate angiotensin-3, angiotensin-4. Angiotensin 1-9 is cleaved from angiotensin-1 by ACE2 and can be further processed by ACE to produce angiotensin 1-7, angiotensin 1-5 and angiotensin 1-4. Angiotensin 1-7 has also been proposed to be cleaved from angiotensin-2 by ACE2 or from angiotensin-1 by MME (neprilysin). In terms of processing, the disulfide bond is labile. Angiotensinogen is present in the circulation in a near 40:60 ratio with the oxidized disulfide-bonded form, which preferentially interacts with receptor-bound renin. In terms of tissue distribution, expressed by the liver and secreted in plasma.

It localises to the secreted. In terms of biological role, essential component of the renin-angiotensin system (RAS), a potent regulator of blood pressure, body fluid and electrolyte homeostasis. Functionally, acts directly on vascular smooth muscle as a potent vasoconstrictor, affects cardiac contractility and heart rate through its action on the sympathetic nervous system, and alters renal sodium and water absorption through its ability to stimulate the zona glomerulosa cells of the adrenal cortex to synthesize and secrete aldosterone. Acts by binding to angiotensin receptors AGTR1 and AGTR2. Also binds the DEAR/FBXW7-AS1 receptor. Its function is as follows. Stimulates aldosterone release. Is a ligand for the G-protein coupled receptor MAS1. Has vasodilator and antidiuretic effects. Has an antithrombotic effect that involves MAS1-mediated release of nitric oxide from platelets. This is Angiotensinogen from Homo sapiens (Human).